A 510-amino-acid chain; its full sequence is MKLAYWMYAGPAHIGTLRVASSFKNVHSIMHAPLGDDYFNVMRSMLERERDFTPVTTSVVDRQVLARGSDEKVIRNIVRKDGEEQPDLIVVTPTCTSSILQEDLHHFVRQAQLSSRCDVLLADVNHYRVNELQAAERTLHQIVEFYINKARKSGELSGPPRRTERPSCNILGISSLGFHHAHDLRELKKLLQDLGIELNLVIPQGASVHNLKHLGRAWFNVVPYRELGPMTARYLQEQFGTPYVEITPMGVVETARFIRQIQQVLNEQGIPVDYEPYIQEQTLYVSQAAWFSRSIDCQNLTGKKAVVFGDCTHAAAITKILAREMGVHVVWAGSYCTYDGEWFQAEVGGYCDQVLLTEDHTRVADAIAQVEPAAIFGTQMERHVGKRLRIPCGVISAPMHVQDFPIGYRPFLGYEGANQIVDLIYNSFTLGMEDHLLEVFGGHDTKEVIHKSLSADSDLIWTREAQAELNKVPGFVRGKVKRNTEKFARERGLTEITLEVMYAAKEALGA.

A [4Fe-4S] cluster-binding site is contributed by Asp36. The active-site Proton donor is the Asp296. A substrate-binding site is contributed by 431 to 432; sequence GM.

It belongs to the ChlB/BchB/BchZ family. As to quaternary structure, protochlorophyllide reductase is composed of three subunits; ChlL, ChlN and ChlB. Forms a heterotetramer of two ChlB and two ChlN subunits. Requires [4Fe-4S] cluster as cofactor.

It catalyses the reaction chlorophyllide a + oxidized 2[4Fe-4S]-[ferredoxin] + 2 ADP + 2 phosphate = protochlorophyllide a + reduced 2[4Fe-4S]-[ferredoxin] + 2 ATP + 2 H2O. Its pathway is porphyrin-containing compound metabolism; chlorophyll biosynthesis (light-independent). Its function is as follows. Component of the dark-operative protochlorophyllide reductase (DPOR) that uses Mg-ATP and reduced ferredoxin to reduce ring D of protochlorophyllide (Pchlide) to form chlorophyllide a (Chlide). This reaction is light-independent. The NB-protein (ChlN-ChlB) is the catalytic component of the complex. The protein is Light-independent protochlorophyllide reductase subunit B of Synechococcus sp. (strain JA-3-3Ab) (Cyanobacteria bacterium Yellowstone A-Prime).